A 322-amino-acid chain; its full sequence is Mitochondrial thiamine pyrophosphate carrier 1 (322 aa).

Solcar repeat units follow at residues 12–111 (GSKT…VTLA), 122–208 (PAAA…LRVP), and 215–310 (PFGS…VLRL). The next 6 helical transmembrane spans lie at 18-38 (MIAG…LDVV), 92-108 (LMYV…YRSV), 128-148 (FIAG…LDLL), 180-200 (FFQG…IFFA), 221-241 (ATAG…FDLI), and 285-302 (GLTV…VTMW).

Belongs to the mitochondrial carrier (TC 2.A.29) family.

Its subcellular location is the mitochondrion inner membrane. Mitochondrial transporter that mediates uptake of thiamine pyrophosphate (ThPP) into mitochondria. This Sclerotinia sclerotiorum (strain ATCC 18683 / 1980 / Ss-1) (White mold) protein is Mitochondrial thiamine pyrophosphate carrier 1 (tpc1).